The primary structure comprises 370 residues: 3-isopropylmalate dehydrogenase (370 aa).

77–90 (GPKWDSVPYEVRPE) provides a ligand contact to NAD(+). Arg97, Arg107, Arg135, and Asp226 together coordinate substrate. Mg(2+) is bound by residues Asp226, Asp250, and Asp254. 290–302 (GSAPDIAGKGIAN) serves as a coordination point for NAD(+).

The protein belongs to the isocitrate and isopropylmalate dehydrogenases family. LeuB type 1 subfamily. In terms of assembly, homodimer. Mg(2+) is required as a cofactor. The cofactor is Mn(2+).

The protein resides in the cytoplasm. The enzyme catalyses (2R,3S)-3-isopropylmalate + NAD(+) = 4-methyl-2-oxopentanoate + CO2 + NADH. It participates in amino-acid biosynthesis; L-leucine biosynthesis; L-leucine from 3-methyl-2-oxobutanoate: step 3/4. Functionally, catalyzes the oxidation of 3-carboxy-2-hydroxy-4-methylpentanoate (3-isopropylmalate) to 3-carboxy-4-methyl-2-oxopentanoate. The product decarboxylates to 4-methyl-2 oxopentanoate. The sequence is that of 3-isopropylmalate dehydrogenase from Rhizobium johnstonii (strain DSM 114642 / LMG 32736 / 3841) (Rhizobium leguminosarum bv. viciae).